The primary structure comprises 157 residues: MAKKQQTKTYTQAIQNRKARFEFEILDTVVAGIELLGSEVKSVRLGKASLNESFAIIHHGEVWLENMQITPYEFNHLDSLEPKRSRKLLLHKAEIAKLQSQISEKGLALIPLKAFFNPKGVLKLELAVAKGKKLFDKRETIKNRDNERQLQQIKKQY.

It belongs to the SmpB family.

It is found in the cytoplasm. Required for rescue of stalled ribosomes mediated by trans-translation. Binds to transfer-messenger RNA (tmRNA), required for stable association of tmRNA with ribosomes. tmRNA and SmpB together mimic tRNA shape, replacing the anticodon stem-loop with SmpB. tmRNA is encoded by the ssrA gene; the 2 termini fold to resemble tRNA(Ala) and it encodes a 'tag peptide', a short internal open reading frame. During trans-translation Ala-aminoacylated tmRNA acts like a tRNA, entering the A-site of stalled ribosomes, displacing the stalled mRNA. The ribosome then switches to translate the ORF on the tmRNA; the nascent peptide is terminated with the 'tag peptide' encoded by the tmRNA and targeted for degradation. The ribosome is freed to recommence translation, which seems to be the essential function of trans-translation. This Chlorobium phaeovibrioides (strain DSM 265 / 1930) (Prosthecochloris vibrioformis (strain DSM 265)) protein is SsrA-binding protein.